We begin with the raw amino-acid sequence, 792 residues long: MEQIITGDGALVSNLDEKITSSGIADAGVDYHTVAIIGPQSSGKSTILNLLFGTKFATMNEQRGRQQTTQGIHAAKSVNDPILLFDVEGCDSRERGDSDALFERKSALFALALSEVLVINMWESDIGRYQASNIPMLKTVFEVNIQLFLAQNTTKSKILFVIRDSTAVNFEAIKFQLNRDITNIWDEINLPDSFKGKQMEDFFEFLYFPIHHMVIQRDQFDADVNTLRKWFNEPPLKDYLFAEKSTKVVPGEGLSQYIRNLWEVINENKELNIPSQRTMLARFKCDENAAEALSKFNKFVEENLQRDPDQPITIIQDFKPLCDKSVENALKYYHDNSWRYSEAVVKEREAQLKQEISDVLLPYFNSQCKLFCDNTLKRFNEFISSIDQELHVGGTWESDVQGKIDSLNMDLKKNIKDTTVEPFSWNYPDYEVMKVMFNATESMKGKLVKQLEQTIITEQMRSFDEQANDILAKVDNLMWDNLRNLIRKVSTETTQNTNQVLKTNVSGVHARNDIKRDFQTHTISLVRESANYIVLKMKNTFDRTFKYEKNGRPRVWTRRDNINQIYENSRDAGLKVLRHFTYCRLAESDDEVKPNDPLTQVLIPHERASEIEDKFERIIIHAYEEARANIKAQANREQIPGWAWLATFLCSSNYIMKLLANPIFFALAVIIGGIYSILRMLGLQDVAKKTLLDKFNSLLKNLTKDENEQEKEGEENEEPEEDQPLPNNNRKRMKLMEKSVSQEFSQKSIYKSSEYKGSGDSLMIPQTSPLGNNDSPEKPRDSLTRTQSLEFM.

The Cytoplasmic segment spans residues 1 to 638 (MEQIITGDGA…NIKAQANREQ (638 aa)). Residues 28–245 (GVDYHTVAII…LKDYLFAEKS (218 aa)) enclose the GB1/RHD3-type G domain. GTP is bound at residue 38–45 (GPQSSGKS). Residues 639 to 659 (IPGWAWLATFLCSSNYIMKLL) form a helical membrane-spanning segment. The Lumenal segment spans residues 660-662 (ANP). Residues 663-683 (IFFALAVIIGGIYSILRMLGL) form a helical membrane-spanning segment. Over 684-792 (QDVAKKTLLD…LTRTQSLEFM (109 aa)) the chain is Cytoplasmic. Residues 691-718 (LLDKFNSLLKNLTKDENEQEKEGEENEE) adopt a coiled-coil conformation. Positions 703 to 792 (TKDENEQEKE…LTRTQSLEFM (90 aa)) are disordered. Residues 707-723 (NEQEKEGEENEEPEEDQ) are compositionally biased toward acidic residues. Composition is skewed to polar residues over residues 739-751 (SVSQ…SIYK) and 764-774 (IPQTSPLGNND).

The protein belongs to the TRAFAC class dynamin-like GTPase superfamily. GB1/RHD3 GTPase family. RHD3 subfamily.

Its subcellular location is the endoplasmic reticulum membrane. Its function is as follows. Probable GTP-binding protein that may be involved in cell development. In Trichomonas vaginalis (strain ATCC PRA-98 / G3), this protein is Protein SEY1 homolog 2.